Here is an 832-residue protein sequence, read N- to C-terminus: Serine/threonine-protein kinase Doa (832 aa).

Disordered stretches follow at residues 1-86 (MVAA…SKYI), 135-158 (LLQH…QQYP), 179-215 (SDPF…KQAP), and 258-419 (SKIG…QLQQ). The span at 8–18 (VPTSSSSSAAT) shows a compositional bias: polar residues. Residues 20–32 (RQKDVDNKLEKCL) show a composition bias toward basic and acidic residues. Low complexity-rich tracts occupy residues 40–53 (TSSN…SNNN), 137–158 (QHQQ…QQYP), and 183–203 (MQQQ…KLQQ). Over residues 271-282 (HSASFSSAQRPT) the composition is skewed to polar residues. 3 stretches are compositionally biased toward low complexity: residues 285–310 (QFHQ…QHQH), 347–365 (QMQP…TQFQ), and 396–419 (SSSS…QLQQ). Positions 479 to 799 (YKIMATLGEG…LGEALHHPFF (321 aa)) constitute a Protein kinase domain. Residues 485–493 (LGEGTFGRV) and lysine 508 each bind ATP. The active-site Proton acceptor is aspartate 605. The interval 809–832 (GEVSNKQPLSSGSSSRERSHSLSR) is disordered. Positions 823 to 832 (SRERSHSLSR) are enriched in basic and acidic residues.

It belongs to the protein kinase superfamily. CMGC Ser/Thr protein kinase family. Lammer subfamily. In terms of assembly, interacts (via N-terminus) with x16 (via Arg/Ser-rich region). Interacts with eEF1gamma (via C-terminus); the interaction is probably direct, is transient and leads to phosphorylation of eEF1gamma by Doa. Mg(2+) is required as a cofactor. Autophosphorylated on serine, threonine and tyrosine residues. Ubiquitous expression in embryos. Stage 17 embryos show elevated expression in CNS and brain. Ubiquitous expression in larval imaginal disks. Increased expression posterior to the eye-antennal disk morphogenetic furrow.

It localises to the cytoplasm. It is found in the cytosol. Its subcellular location is the nucleus. The catalysed reaction is L-seryl-[protein] + ATP = O-phospho-L-seryl-[protein] + ADP + H(+). It carries out the reaction L-threonyl-[protein] + ATP = O-phospho-L-threonyl-[protein] + ADP + H(+). The enzyme catalyses L-tyrosyl-[protein] + ATP = O-phospho-L-tyrosyl-[protein] + ADP + H(+). Its function is as follows. Dual specificity kinase involved in the negative regulation of microtubule-based transport through phsophorylation of the microtuble-binding protein eEF1gamma. May function in the control of alternative splicing by phosphorylating serine/arginine-rich splicing factors, the SR proteins, including x16. Negative regulator of the copia retrotransposon element of the white (w) gene. In the eye, it is required for normal pigmentation, photoreceptor cell development and for organization of interommatidial bristles. Also essential for embryonic segmentation and differentiation of the nervous system. May be the specific isoform involved in regulation of microtubule-based transport through phosphorylation of the microtubule binding protein eEF1gamma. This is Serine/threonine-protein kinase Doa from Drosophila melanogaster (Fruit fly).